Consider the following 1199-residue polypeptide: Metabotropic glutamate receptor 1 (1199 aa).

A signal peptide spans 1 to 20 (MVRLLLIFFPMIFLEMSILP). Residues 21 to 592 (RMPDRKVLLA…IRYLEWSDIE (572 aa)) lie on the Extracellular side of the membrane. A disulfide bond links Cys67 and Cys109. Tyr74 is an L-glutamate binding site. Asn98 carries an N-linked (GlcNAc...) asparagine glycan. L-glutamate-binding positions include Ser165 and 186–188 (SAT). Residue Asn223 is glycosylated (N-linked (GlcNAc...) asparagine). Tyr236 contributes to the L-glutamate binding site. Cys289 and Cys291 are joined by a disulfide. Position 318 (Asp318) interacts with L-glutamate. Cysteines 378 and 394 form a disulfide. Asn397 is a glycosylation site (N-linked (GlcNAc...) asparagine). L-glutamate is bound at residue Lys409. Cys432 and Cys439 are disulfide-bonded. Asn515 carries N-linked (GlcNAc...) asparagine glycosylation. Residues 593–615 (SIIAIAFSCLGILVTLFVTLIFV) form a helical membrane-spanning segment. Over 616-629 (LYRDTPVVKSSSRE) the chain is Cytoplasmic. A helical transmembrane segment spans residues 630–650 (LCYIILAGIFLGYVCPFTLIA). Residues 651-658 (KPTTTSCY) lie on the Extracellular side of the membrane. Cys657 and Cys746 are oxidised to a cystine. Residues 659-680 (LQRLLVGLSSAMCYSALVTKTN) traverse the membrane as a helical segment. At 681–703 (RIARILAGSKKKICTRKPRFMSA) the chain is on the cytoplasmic side. The helical transmembrane segment at 704–727 (WAQVIIASILISVQLTLVVTLIIM) threads the bilayer. Over 728 to 750 (EPPMPILSYPSIKEVYLICNTSN) the chain is Extracellular. Asn747 is a glycosylation site (N-linked (GlcNAc...) asparagine). A helical transmembrane segment spans residues 751–772 (LGVVAPVGYNGLLIMSCTYYAF). Residues 773–785 (KTRNVPANFNEAK) lie on the Cytoplasmic side of the membrane. Residues 786–807 (YIAFTMYTTCIIWLAFVPIYFG) form a helical membrane-spanning segment. Residues 808–815 (SNYKIITT) are Extracellular-facing. Residues 816-840 (CFAVSLSVTVALGCMFTPKMYIIIA) form a helical membrane-spanning segment. The Cytoplasmic portion of the chain corresponds to 841–1199 (KPERNVRSAF…RDYKQSSSTL (359 aa)). Ser853 carries the phosphoserine modification. Thr871 bears the Phosphothreonine mark. Disordered regions lie at residues 882–906 (GAGN…APKG), 959–1035 (EEDN…QPKS), and 1055–1082 (HAVL…QHLQ). Polar residues predominate over residues 885-895 (NANSNGKSVSW). Residues Ser894 and Ser969 each carry the phosphoserine modification. The span at 1012 to 1032 (GLPPPLPQQQQQPPPQPPPQQ) shows a compositional bias: pro residues. At Ser1097 the chain carries Phosphoserine. The tract at residues 1118–1177 (VYEREGNTEEDDLEEEEDLPAASKLTPEDSPALTPPSPFRDSVASGSSVPSSPVSESVLC) is disordered. Over residues 1125-1136 (TEEDDLEEEEDL) the composition is skewed to acidic residues. Residue Ser1147 is modified to Phosphoserine. The residue at position 1151 (Thr1151) is a Phosphothreonine. Ser1154 is subject to Phosphoserine. The segment covering 1159–1175 (SVASGSSVPSSPVSESV) has biased composition (low complexity).

The protein belongs to the G-protein coupled receptor 3 family. As to quaternary structure, homodimer; disulfide-linked. The PPXXF motif binds HOMER1, HOMER2 and HOMER3. Interacts with TAMALIN. Interacts with RYR1, RYR2, ITPR1, SHANK1 and SHANK3. Interacts with SHIA1. As to expression, expressed in the striatum (at protein level). Expressed in type II unipolar brush cells of the cerebellum (at protein level).

Its subcellular location is the cell membrane. The protein resides in the postsynaptic cell membrane. The protein localises to the cell projection. It localises to the dendrite. G-protein coupled receptor for glutamate. Ligand binding causes a conformation change that triggers signaling via guanine nucleotide-binding proteins (G proteins) and modulates the activity of down-stream effectors. Signaling activates a phosphatidylinositol-calcium second messenger system. May participate in the central action of glutamate in the CNS, such as long-term potentiation in the hippocampus and long-term depression in the cerebellum (By. similarity). May function in the light response in the retina. Induces GRID1 and GRID2 cation-channel activation via GNAQ-PLC-PKC pathway in dopaminergic neurons and cerebellar Purkinje cell, respectively. This chain is Metabotropic glutamate receptor 1 (Grm1), found in Mus musculus (Mouse).